The primary structure comprises 276 residues: Elongation factor Ts, mitochondrial (276 aa).

The protein belongs to the EF-Ts family.

The protein resides in the mitochondrion. Its function is as follows. Associates with the EF-Tu.GDP complex and induces the exchange of GDP to GTP. It remains bound to the aminoacyl-tRNA.EF-Tu.GTP complex up to the GTP hydrolysis stage on the ribosome. The chain is Elongation factor Ts, mitochondrial from Leishmania major.